A 228-amino-acid polypeptide reads, in one-letter code: Urease accessory protein UreF 1 (228 aa).

The protein belongs to the UreF family. As to quaternary structure, ureD, UreF and UreG form a complex that acts as a GTP-hydrolysis-dependent molecular chaperone, activating the urease apoprotein by helping to assemble the nickel containing metallocenter of UreC. The UreE protein probably delivers the nickel.

It is found in the cytoplasm. In terms of biological role, required for maturation of urease via the functional incorporation of the urease nickel metallocenter. This chain is Urease accessory protein UreF 1, found in Brucella anthropi (strain ATCC 49188 / DSM 6882 / CCUG 24695 / JCM 21032 / LMG 3331 / NBRC 15819 / NCTC 12168 / Alc 37) (Ochrobactrum anthropi).